The primary structure comprises 350 residues: Histidinol-phosphate aminotransferase (350 aa).

The residue at position 209 (Lys-209) is an N6-(pyridoxal phosphate)lysine.

The protein belongs to the class-II pyridoxal-phosphate-dependent aminotransferase family. Histidinol-phosphate aminotransferase subfamily. As to quaternary structure, homodimer. Pyridoxal 5'-phosphate serves as cofactor.

It carries out the reaction L-histidinol phosphate + 2-oxoglutarate = 3-(imidazol-4-yl)-2-oxopropyl phosphate + L-glutamate. It participates in amino-acid biosynthesis; L-histidine biosynthesis; L-histidine from 5-phospho-alpha-D-ribose 1-diphosphate: step 7/9. The chain is Histidinol-phosphate aminotransferase from Citrifermentans bemidjiense (strain ATCC BAA-1014 / DSM 16622 / JCM 12645 / Bem) (Geobacter bemidjiensis).